The chain runs to 96 residues: Protein Vpr (96 aa).

A homooligomerization region spans residues 1–42; the sequence is MEQAPEDQGPQREPYNDWTLELLEELKNEAVRHFPRIWLHSL. A phosphoserine; by host mark is found at Ser-79, Ser-94, and Ser-96.

Belongs to the HIV-1 VPR protein family. In terms of assembly, homooligomer, may form homodimer. Interacts with p6-gag region of the Pr55 Gag precursor protein through a (Leu-X-X)4 motif near the C-terminus of the P6gag protein. Interacts with host UNG. May interact with host RAD23A/HHR23A. Interacts with host VPRBP/DCAF1, leading to hijack the CUL4A-RBX1-DDB1-DCAF1/VPRBP complex, mediating ubiquitination of host proteins such as TERT and ZGPAT and arrest of the cell cycle in G2 phase. Post-translationally, phosphorylated on several residues by host. These phosphorylations regulate VPR activity for the nuclear import of the HIV-1 pre-integration complex.

It localises to the virion. The protein localises to the host nucleus. It is found in the host extracellular space. Its function is as follows. During virus replication, may deplete host UNG protein, and incude G2-M cell cycle arrest. Acts by targeting specific host proteins for degradation by the 26S proteasome, through association with the cellular CUL4A-DDB1 E3 ligase complex by direct interaction with host VPRPB/DCAF-1. Cell cycle arrest reportedly occurs within hours of infection and is not blocked by antiviral agents, suggesting that it is initiated by the VPR carried into the virion. Additionally, VPR induces apoptosis in a cell cycle dependent manner suggesting that these two effects are mechanistically linked. Detected in the serum and cerebrospinal fluid of AIDS patient, VPR may also induce cell death to bystander cells. During virus entry, plays a role in the transport of the viral pre-integration (PIC) complex to the host nucleus. This function is crucial for viral infection of non-dividing macrophages. May act directly at the nuclear pore complex, by binding nucleoporins phenylalanine-glycine (FG)-repeat regions. The protein is Protein Vpr of Human immunodeficiency virus type 1 group M subtype B (strain 89.6) (HIV-1).